A 33-amino-acid polypeptide reads, in one-letter code: Tail virion protein G7P (33 aa).

The chain crosses the membrane as a helical span at residues 10-30 (IYQAMIQISVVLCFALGIIAG).

Belongs to the inovirus G7P protein family.

It is found in the virion. The protein resides in the host membrane. May initiate with G9P the virion concomitant assembly-budding process, by interacting with the packaging signal of the viral genome. The assembly-budding takes place at the host inner membrane. In turn, G7P and G9P are present at the end of the filamentous virion that emerges first from the bacterial host. The sequence is that of Tail virion protein G7P (VII) from Escherichia coli (Bacteriophage f1).